The sequence spans 151 residues: Ribonuclease H (151 aa).

The region spanning 1 to 141 is the RNase H type-1 domain; that stretch reads MQEVTVYSDG…ADALANKGVE (141 aa). The Mg(2+) site is built by aspartate 9, glutamate 47, aspartate 69, and aspartate 133.

This sequence belongs to the RNase H family. Monomer. It depends on Mg(2+) as a cofactor.

The protein resides in the cytoplasm. It catalyses the reaction Endonucleolytic cleavage to 5'-phosphomonoester.. In terms of biological role, endonuclease that specifically degrades the RNA of RNA-DNA hybrids. The polypeptide is Ribonuclease H (Ralstonia nicotianae (strain ATCC BAA-1114 / GMI1000) (Ralstonia solanacearum)).